We begin with the raw amino-acid sequence, 850 residues long: Protein stoned-A (850 aa).

The span at 1–16 (MLKLPKGLKKKKKKSK) shows a compositional bias: basic residues. Disordered regions lie at residues 1–95 (MLKL…AAGG) and 125–164 (KESFYQRLPSAAEKKKQKEEEAARLEAEQQEREKQRLGQI). The segment at 26-290 (ELEQYKRDLK…QNLLLSESIE (265 aa)) is interaction with Syt. Residues 28–38 (EQYKRDLKAKQ) are compositionally biased toward basic and acidic residues. Residues 78-91 (ILNAQQQLSDQNQG) show a composition bias toward polar residues. The span at 136-164 (AEKKKQKEEEAARLEAEQQEREKQRLGQI) shows a compositional bias: basic and acidic residues. The short motif at 224-226 (DPF) is the DPF 1 element. 2 disordered regions span residues 345–375 (EEEELEQKGRENQLLNPDLSEFDSLKDEEDD) and 412–498 (GSWA…PPFL). Residues 431-440 (PPPPVRPPTG) are compositionally biased toward pro residues. Positions 451–462 (SEDEEENPEDDP) are enriched in acidic residues. 2 consecutive short sequence motifs (DPF) follow at residues 461–463 (DPF) and 535–537 (DPF). Disordered stretches follow at residues 573-610 (HSLSDQDFDPRADQKEPAAPQVKLEQKETDFDTAQRKS), 634-673 (GNELGASKKPLTPYYAPSDNRLQEREREAEDVDPFDTSHV), 738-760 (RKKLTNSGGSGKSEEDIDPFDTS), and 800-825 (LGLGDKVLTPSTHSRPSLPAQDIDPF). Composition is skewed to basic and acidic residues over residues 574–588 (SLSDQDFDPRADQKE) and 596–607 (LEQKETDFDTAQ). 3 short sequence motifs (DPF) span residues 666 to 668 (DPF), 755 to 757 (DPF), and 823 to 825 (DPF).

As to quaternary structure, interacts with the second C2 domain of Syt.

Its subcellular location is the cytoplasm. The protein resides in the synapse. It localises to the cytoplasmic vesicle. It is found in the secretory vesicle. The protein localises to the synaptic vesicle. Functionally, adapter protein involved in endocytic recycling of synaptic vesicles membranes. May act by mediating the retrieval of synaptotagmin protein Syt from the plasma membrane, thereby facilitating the internalization of multiple synaptic vesicles from the plasma membrane. This chain is Protein stoned-A (stnA), found in Drosophila melanogaster (Fruit fly).